A 648-amino-acid polypeptide reads, in one-letter code: Bifunctional protein TilS/HprT (648 aa).

An ATP-binding site is contributed by 29 to 34 (SGGPDS). Position 627 (aspartate 627) interacts with Mg(2+).

It in the N-terminal section; belongs to the tRNA(Ile)-lysidine synthase family. The protein in the C-terminal section; belongs to the purine/pyrimidine phosphoribosyltransferase family. Requires Mg(2+) as cofactor.

The protein localises to the cytoplasm. The enzyme catalyses IMP + diphosphate = hypoxanthine + 5-phospho-alpha-D-ribose 1-diphosphate. It catalyses the reaction GMP + diphosphate = guanine + 5-phospho-alpha-D-ribose 1-diphosphate. The catalysed reaction is cytidine(34) in tRNA(Ile2) + L-lysine + ATP = lysidine(34) in tRNA(Ile2) + AMP + diphosphate + H(+). Ligates lysine onto the cytidine present at position 34 of the AUA codon-specific tRNA(Ile) that contains the anticodon CAU, in an ATP-dependent manner. Cytidine is converted to lysidine, thus changing the amino acid specificity of the tRNA from methionine to isoleucine. This chain is Bifunctional protein TilS/HprT (tilS/hprT), found in Listeria monocytogenes serotype 4b (strain F2365).